The chain runs to 524 residues: Lysine--tRNA ligase (524 aa).

Mg(2+) is bound by residues E431 and E438.

The protein belongs to the class-II aminoacyl-tRNA synthetase family. In terms of assembly, homodimer. Mg(2+) is required as a cofactor.

Its subcellular location is the cytoplasm. It carries out the reaction tRNA(Lys) + L-lysine + ATP = L-lysyl-tRNA(Lys) + AMP + diphosphate. This Chlamydia muridarum (strain MoPn / Nigg) protein is Lysine--tRNA ligase (lysS).